The primary structure comprises 111 residues: uncharacterized protein (111 aa).

The protein belongs to the asfivirus E111R family.

This is an uncharacterized protein from African swine fever virus (strain Badajoz 1971 Vero-adapted) (Ba71V).